Consider the following 375-residue polypeptide: Peritrophin-48 (375 aa).

Positions 1–20 (MIIKTLLASVAIMLIATVNA) are cleaved as a signal peptide. 5 Chitin-binding type-2 domains span residues 25–83 (AKYC…NCIL), 86–143 (DNPC…SDDD), 153–210 (LNIC…MCER), 224–292 (ETLC…GCNR), and 294–360 (EYTT…ACQN). A disulfide bridge links Cys-60 with Cys-73. A glycan (N-linked (GlcNAc...) asparagine) is linked at Asn-117. Intrachain disulfides connect Cys-120/Cys-133, Cys-187/Cys-200, Cys-265/Cys-278, and Cys-330/Cys-343. Asn-360 carries an N-linked (GlcNAc...) asparagine glycan.

Glycosylated. In terms of tissue distribution, cardia and midgut peritrophic membrane.

May bind chitin or related oligosaccharide structures. In Lucilia cuprina (Green bottle fly), this protein is Peritrophin-48.